We begin with the raw amino-acid sequence, 306 residues long: MTTSQVLHPRWADTLMYVYEKSPNENNQNKSQIMEGLSGNCPATHCRELISHPALGRHSGTIATHQGSVYSDISSPETGRQCPAPQTSSSASLSYGYPFGNPYYGCRLSHSHNVNLQQKPCSYHPAEKYAETSSALPTEELSSRAKEFAFYPSLASSYQAVPGYLDMSVVPSISVHPEPRHDALIPMEGYQHWALSNGWDGQVYCSKEQTQSSHLWKSPFPDVVPLQPEVSSYRRGRKKRVPYTKIQLKELEKEYAASKFITKDKRRRISATTNLSERQVTIWFQNRRVKEKKFVSKSKTNNHMHT.

The segment at residues G236–V295 is a DNA-binding region (homeobox).

It belongs to the Abd-B homeobox family.

Its subcellular location is the nucleus. Sequence-specific transcription factor which is part of a developmental regulatory system that provides cells with specific positional identities on the anterior-posterior axis. This chain is Homeobox protein Hox-C13a (hoxc13a), found in Danio rerio (Zebrafish).